Reading from the N-terminus, the 122-residue chain is Large ribosomal subunit protein uL14 (122 aa).

It belongs to the universal ribosomal protein uL14 family. Part of the 50S ribosomal subunit. Forms a cluster with proteins L3 and L19. In the 70S ribosome, L14 and L19 interact and together make contacts with the 16S rRNA in bridges B5 and B8.

Functionally, binds to 23S rRNA. Forms part of two intersubunit bridges in the 70S ribosome. The polypeptide is Large ribosomal subunit protein uL14 (Anaeromyxobacter dehalogenans (strain 2CP-1 / ATCC BAA-258)).